A 281-amino-acid polypeptide reads, in one-letter code: Bifunctional protein FolD (281 aa).

Residues 167 to 169 (GRS) and S192 each bind NADP(+).

This sequence belongs to the tetrahydrofolate dehydrogenase/cyclohydrolase family. Homodimer.

The enzyme catalyses (6R)-5,10-methylene-5,6,7,8-tetrahydrofolate + NADP(+) = (6R)-5,10-methenyltetrahydrofolate + NADPH. The catalysed reaction is (6R)-5,10-methenyltetrahydrofolate + H2O = (6R)-10-formyltetrahydrofolate + H(+). Its pathway is one-carbon metabolism; tetrahydrofolate interconversion. Catalyzes the oxidation of 5,10-methylenetetrahydrofolate to 5,10-methenyltetrahydrofolate and then the hydrolysis of 5,10-methenyltetrahydrofolate to 10-formyltetrahydrofolate. The sequence is that of Bifunctional protein FolD from Alcanivorax borkumensis (strain ATCC 700651 / DSM 11573 / NCIMB 13689 / SK2).